Here is a 55-residue protein sequence, read N- to C-terminus: Large ribosomal subunit protein bL33 (55 aa).

It belongs to the bacterial ribosomal protein bL33 family.

This Campylobacter fetus subsp. fetus (strain 82-40) protein is Large ribosomal subunit protein bL33.